Here is a 354-residue protein sequence, read N- to C-terminus: MEAVLILEDGTILKGKGFGAEKEVFGELVFTTVMTGYVEVLTDPSYKGQIVMMTYPLEGNYGVKKDWFESDGIKAEGFVVREVTSKALDDFLKEYDIPGIQDIDTRFLTRKIRDKGVVKSCLKVAEEISDDEISELLERVKRYSDISDIDLVPLVSTKEPKIHKTANPKARCVLIDCGVKLNIIRSLVQRNCEVIQVPYNTKYDEILEYKPDFVLISNGPGDPARLKEVIKNIKNLIGVVPITGICLGNQLLSLAFGGETYKMKFGHRGGNQPVKDLKTQKVYITSQNHGFAVRKESLPDDVEVSFINLNDMTVEGIRHKDLPIFSVQFHPEARPGPHDTMFLFDEMIKLKDRK.

A CPSase region spans residues 1–167 (MEAVLILEDG…KEPKIHKTAN (167 aa)). The L-glutamine site is built by serine 45, glycine 219, and glycine 221. The Glutamine amidotransferase type-1 domain maps to 171–354 (RCVLIDCGVK…DEMIKLKDRK (184 aa)). The Nucleophile role is filled by cysteine 246. Residues leucine 247, glutamine 250, asparagine 288, glycine 290, and phenylalanine 291 each coordinate L-glutamine. Catalysis depends on residues histidine 330 and glutamate 332.

It belongs to the CarA family. As to quaternary structure, composed of two chains; the small (or glutamine) chain promotes the hydrolysis of glutamine to ammonia, which is used by the large (or ammonia) chain to synthesize carbamoyl phosphate. Tetramer of heterodimers (alpha,beta)4.

It carries out the reaction hydrogencarbonate + L-glutamine + 2 ATP + H2O = carbamoyl phosphate + L-glutamate + 2 ADP + phosphate + 2 H(+). The enzyme catalyses L-glutamine + H2O = L-glutamate + NH4(+). The protein operates within amino-acid biosynthesis; L-arginine biosynthesis; carbamoyl phosphate from bicarbonate: step 1/1. It functions in the pathway pyrimidine metabolism; UMP biosynthesis via de novo pathway; (S)-dihydroorotate from bicarbonate: step 1/3. In terms of biological role, small subunit of the glutamine-dependent carbamoyl phosphate synthetase (CPSase). CPSase catalyzes the formation of carbamoyl phosphate from the ammonia moiety of glutamine, carbonate, and phosphate donated by ATP, constituting the first step of 2 biosynthetic pathways, one leading to arginine and/or urea and the other to pyrimidine nucleotides. The small subunit (glutamine amidotransferase) binds and cleaves glutamine to supply the large subunit with the substrate ammonia. This is Carbamoyl phosphate synthase small chain from Methanocaldococcus jannaschii (strain ATCC 43067 / DSM 2661 / JAL-1 / JCM 10045 / NBRC 100440) (Methanococcus jannaschii).